Reading from the N-terminus, the 589-residue chain is Aspartate--tRNA ligase (589 aa).

Residue Glu-174 participates in L-aspartate binding. The aspartate stretch occupies residues 198–201 (QLFK). Arg-220 provides a ligand contact to L-aspartate. Residues 220–222 (RDE) and Gln-229 contribute to the ATP site. His-448 serves as a coordination point for L-aspartate. Position 484 (Glu-484) interacts with ATP. Arg-491 provides a ligand contact to L-aspartate. An ATP-binding site is contributed by 536–539 (GLDR).

The protein belongs to the class-II aminoacyl-tRNA synthetase family. Type 1 subfamily. In terms of assembly, homodimer.

It is found in the cytoplasm. It carries out the reaction tRNA(Asp) + L-aspartate + ATP = L-aspartyl-tRNA(Asp) + AMP + diphosphate. In terms of biological role, catalyzes the attachment of L-aspartate to tRNA(Asp) in a two-step reaction: L-aspartate is first activated by ATP to form Asp-AMP and then transferred to the acceptor end of tRNA(Asp). This chain is Aspartate--tRNA ligase, found in Leuconostoc citreum (strain KM20).